A 187-amino-acid polypeptide reads, in one-letter code: ATP synthase subunit b 2 (187 aa).

Over residues 1-13 (MAESHATGTTTHT) the composition is skewed to polar residues. Residues 1-21 (MAESHATGTTTHTEVPHGKPE) are disordered. The helical transmembrane segment at 31–53 (ASQLVSFAIAFALLYVIVSRFAL) threads the bilayer.

The protein belongs to the ATPase B chain family. F-type ATPases have 2 components, F(1) - the catalytic core - and F(0) - the membrane proton channel. F(1) has five subunits: alpha(3), beta(3), gamma(1), delta(1), epsilon(1). F(0) has three main subunits: a(1), b(2) and c(10-14). The alpha and beta chains form an alternating ring which encloses part of the gamma chain. F(1) is attached to F(0) by a central stalk formed by the gamma and epsilon chains, while a peripheral stalk is formed by the delta and b chains.

It localises to the cell inner membrane. Functionally, f(1)F(0) ATP synthase produces ATP from ADP in the presence of a proton or sodium gradient. F-type ATPases consist of two structural domains, F(1) containing the extramembraneous catalytic core and F(0) containing the membrane proton channel, linked together by a central stalk and a peripheral stalk. During catalysis, ATP synthesis in the catalytic domain of F(1) is coupled via a rotary mechanism of the central stalk subunits to proton translocation. Its function is as follows. Component of the F(0) channel, it forms part of the peripheral stalk, linking F(1) to F(0). The b'-subunit is a diverged and duplicated form of b found in plants and photosynthetic bacteria. The chain is ATP synthase subunit b 2 (atpF2) from Afipia carboxidovorans (strain ATCC 49405 / DSM 1227 / KCTC 32145 / OM5) (Oligotropha carboxidovorans).